A 563-amino-acid chain; its full sequence is Putative solute carrier family 26 member 10P (563 aa).

5 consecutive transmembrane segments (helical) span residues 45–65 (ALLA…PVLI), 75–91 (LSTG…GSAV), 116–136 (VGVA…MFVL), 152–172 (ALTS…LLGL), and 352–372 (LAGL…GPFF). Positions 406-541 (RVDFLLQVPG…VSVQDAAAYA (136 aa)) constitute an STAS domain.

Belongs to the SLC26A/SulP transporter (TC 2.A.53) family.

It is found in the membrane. In terms of biological role, chloride/bicarbonate exchanger. The polypeptide is Putative solute carrier family 26 member 10P (SLC26A10P) (Homo sapiens (Human)).